Reading from the N-terminus, the 1060-residue chain is Probable serine/threonine-protein kinase MARK-A (1060 aa).

2 stretches are compositionally biased toward basic and acidic residues: residues 1–11 (METLKEEEQFR) and 23–37 (HLKE…EREQ). Disordered stretches follow at residues 1 to 52 (METL…LQLQ) and 67 to 88 (NKIP…SISV). Composition is skewed to low complexity over residues 38–52 (QQQQ…LQLQ) and 68–88 (KIPS…SISV). The region spanning 109 to 361 (YLVIKTIGRG…MEEIINHPWL (253 aa)) is the Protein kinase domain. Residues 115–123 (IGRGQFGKV) and K139 contribute to the ATP site. The active-site Proton acceptor is D232. The segment covering 409 to 475 (INNINNTMAT…TTTTNATTTT (67 aa)) has biased composition (low complexity). 4 disordered regions span residues 409–488 (INNI…NNEE), 560–701 (GENS…SPLC), 714–886 (LREK…PVHS), and 899–966 (DDKS…QEPR). Residues 488–528 (ELDQEIIEELVGLGFEREELCNSIRQNKYNDAASTYFLLQG) enclose the UBA domain. Polar residues predominate over residues 577 to 594 (TVDSPKSTNTPQYRSSNT). Composition is skewed to low complexity over residues 603-613 (QQQQQQQQQQQ), 620-637 (QQQN…NNHN), 650-699 (STTV…NPSP), and 720-760 (TTTN…TSPN). Over residues 761-770 (LQPFSLASTA) the composition is skewed to polar residues. 2 stretches are compositionally biased toward low complexity: residues 771-799 (NNNN…SLNS) and 811-831 (QQQQ…NSSS). A compositionally biased stretch (basic and acidic residues) spans 837-846 (QRQESRKLED). Low complexity-rich tracts occupy residues 904 to 926 (NSSS…TNNT) and 935 to 965 (QNSN…QQEP). The KA1 domain maps to 1008–1057 (IECETEGVRFSIEICRLPRLSVNGLKFKRIGGSSWRYKSICKDLLSQMKL).

The protein belongs to the protein kinase superfamily. CAMK Ser/Thr protein kinase family. SNF1 subfamily.

It carries out the reaction L-seryl-[protein] + ATP = O-phospho-L-seryl-[protein] + ADP + H(+). The catalysed reaction is L-threonyl-[protein] + ATP = O-phospho-L-threonyl-[protein] + ADP + H(+). In Dictyostelium discoideum (Social amoeba), this protein is Probable serine/threonine-protein kinase MARK-A (mrkA).